Here is a 310-residue protein sequence, read N- to C-terminus: Methionyl-tRNA formyltransferase (310 aa).

A (6S)-5,6,7,8-tetrahydrofolate-binding site is contributed by 111-114 (SILP).

The protein belongs to the Fmt family.

It carries out the reaction L-methionyl-tRNA(fMet) + (6R)-10-formyltetrahydrofolate = N-formyl-L-methionyl-tRNA(fMet) + (6S)-5,6,7,8-tetrahydrofolate + H(+). Attaches a formyl group to the free amino group of methionyl-tRNA(fMet). The formyl group appears to play a dual role in the initiator identity of N-formylmethionyl-tRNA by promoting its recognition by IF2 and preventing the misappropriation of this tRNA by the elongation apparatus. The sequence is that of Methionyl-tRNA formyltransferase from Methylobacterium sp. (strain 4-46).